The following is a 324-amino-acid chain: Beta-ketoacyl-[acyl-carrier-protein] synthase III (324 aa).

Active-site residues include Cys112 and His249. Positions 250–254 (QANDR) are ACP-binding. The active site involves Asn279.

Belongs to the thiolase-like superfamily. FabH family. In terms of assembly, homodimer.

It localises to the cytoplasm. The catalysed reaction is malonyl-[ACP] + acetyl-CoA + H(+) = 3-oxobutanoyl-[ACP] + CO2 + CoA. The protein operates within lipid metabolism; fatty acid biosynthesis. Its function is as follows. Catalyzes the condensation reaction of fatty acid synthesis by the addition to an acyl acceptor of two carbons from malonyl-ACP. Catalyzes the first condensation reaction which initiates fatty acid synthesis and may therefore play a role in governing the total rate of fatty acid production. Possesses both acetoacetyl-ACP synthase and acetyl transacylase activities. Its substrate specificity determines the biosynthesis of branched-chain and/or straight-chain of fatty acids. The sequence is that of Beta-ketoacyl-[acyl-carrier-protein] synthase III from Streptococcus pneumoniae serotype 2 (strain D39 / NCTC 7466).